The primary structure comprises 493 residues: Aspartate-semialdehyde dehydrogenase (Non-phosphorylating) (493 aa).

NADP(+)-binding positions include 160-161 (WN), 184-187 (KPAH), and 237-238 (GS). The active-site Proton acceptor is Glu259. Leu260 is an NADP(+) binding site. The Nucleophile role is filled by Cys293. Residue Glu390 coordinates NADP(+).

This sequence belongs to the aldehyde dehydrogenase family.

The protein resides in the cytoplasm. It carries out the reaction L-aspartate 4-semialdehyde + NAD(+) + H2O = L-aspartate + NADH + 2 H(+). Its function is as follows. Involved in the degradation of ectoine, which allows H.elongata to utilize ectoine as both a carbon and a nitrogen source for growth. Probably catalyzes the NAD(+)-dependent oxidation of L-aspartate-semialdehyde to L-aspartate. The sequence is that of Aspartate-semialdehyde dehydrogenase (Non-phosphorylating) from Halomonas elongata (strain ATCC 33173 / DSM 2581 / NBRC 15536 / NCIMB 2198 / 1H9).